Reading from the N-terminus, the 527-residue chain is Cytochrome P450 monooygenase 3 (527 aa).

A helical membrane pass occupies residues 21 to 41 (IAVAFAALCGATGLLAFSWWI). Cys-473 contacts heme.

It belongs to the cytochrome P450 family. Heme serves as cofactor.

It localises to the membrane. It participates in plant hormone biosynthesis; gibberellin biosynthesis. Gibberellin 13-hydroxylase; part of the gene cluster that mediates the biosynthesis of gibberellins (GAs), diterpenoids that may provide a selective advantage during infection of the preferred host plant, rice. Gibberellins (GAs) are diterpenoids and are synthesized via the mevalonate pathway. Biosynthesis of the major metabolite GA3 (gibberellic acid) from geranylgeranyl diphosphate (GGPP) requires 13 steps. The GGPP produced by the geranylgeranyl diphosphate synthase GGS2 is converted to ent-kaurene via ent-copalyldiphosphate in a two-step cyclization reaction performed by the bifunctional ent-copalyl diphosphate synthase/ent-kaurene synthase enzyme (CPS/KS). Ent-Kaurene is metabolized to GAs by a series of oxidation reactions catalyzed by cytochrome P450 monooxygenases. Cytochrome P450 monooxygenase P450-4 is an ent-kaurene oxidase that catalyzes the three oxidation steps between ent-kaurene and ent-kaurenoic acid. The highly multifunctional cytochrome P450 monooxygenase P450-1 then catalyzes four steps involving oxidation at two carbon atoms, in the main pathway from ent-kaurenoic acid to GA14 via GA12-aldehyde as well as producing kaurenolides and fujenoic acids as by-products. The cytochrome P450 monooxygenase P450-2 then converts GA14 to GA4 by removal of C-20. GA4 is further converted to GA7 by the GA4 desaturase DES via 1,2-desaturation before cytochrome P450 monooxygenase P450-3, a 13-hydroxylase, hydroxylates GA7 to GA3, the final product of the GA-biosynthetic pathway. This chain is Cytochrome P450 monooygenase 3, found in Gibberella fujikuroi (strain CBS 195.34 / IMI 58289 / NRRL A-6831) (Bakanae and foot rot disease fungus).